We begin with the raw amino-acid sequence, 255 residues long: Type III pantothenate kinase (255 aa).

An ATP-binding site is contributed by Asp-6–Val-13. Residues Tyr-100 and Gly-107 to Arg-110 contribute to the substrate site. The active-site Proton acceptor is Asp-109. Residue Asp-129 participates in K(+) binding. An ATP-binding site is contributed by Thr-132. Thr-184 lines the substrate pocket.

It belongs to the type III pantothenate kinase family. Homodimer. Requires NH4(+) as cofactor. It depends on K(+) as a cofactor.

It localises to the cytoplasm. It carries out the reaction (R)-pantothenate + ATP = (R)-4'-phosphopantothenate + ADP + H(+). It participates in cofactor biosynthesis; coenzyme A biosynthesis; CoA from (R)-pantothenate: step 1/5. Its function is as follows. Catalyzes the phosphorylation of pantothenate (Pan), the first step in CoA biosynthesis. This is Type III pantothenate kinase from Syntrophotalea carbinolica (strain DSM 2380 / NBRC 103641 / GraBd1) (Pelobacter carbinolicus).